Consider the following 144-residue polypeptide: Austinoid biosynthesis cluster protein S (144 aa).

The protein belongs to the trt14 isomerase family. As to quaternary structure, homodimer.

Its pathway is secondary metabolite biosynthesis; terpenoid biosynthesis. Functionally, part of the gene cluster that mediates the biosynthesis of calidodehydroaustin, a fungal meroterpenoid. The first step of the pathway is the synthesis of 3,5-dimethylorsellinic acid by the polyketide synthase ausA. 3,5-dimethylorsellinic acid is then prenylated by the polyprenyl transferase ausN. Further epoxidation by the FAD-dependent monooxygenase ausM and cyclization by the probable terpene cyclase ausL lead to the formation of protoaustinoid A. Protoaustinoid A is then oxidized to spiro-lactone preaustinoid A3 by the combined action of the FAD-binding monooxygenases ausB and ausC, and the dioxygenase ausE. Acid-catalyzed keto-rearrangement and ring contraction of the tetraketide portion of preaustinoid A3 by ausJ lead to the formation of preaustinoid A4. The aldo-keto reductase ausK, with the help of ausH, is involved in the next step by transforming preaustinoid A4 into isoaustinone which is in turn hydroxylated by the P450 monooxygenase ausI to form austinolide. The cytochrome P450 monooxygenase ausG modifies austinolide to austinol. Austinol is further acetylated to austin by the O-acetyltransferase ausP, which spontaneously changes to dehydroaustin. The cytochrome P450 monooxygenase ausR then converts dehydroaustin is into 7-dehydrodehydroaustin. The hydroxylation catalyzed by ausR permits the O-acetyltransferase ausQ to add an additional acetyl group to the molecule, leading to the formation of acetoxydehydroaustin. The short chain dehydrogenase ausT catalyzes the reduction of the double bond present between carbon atoms 1 and 2 to convert 7-dehydrodehydroaustin into 1,2-dihydro-7-hydroxydehydroaustin. AusQ catalyzes not only an acetylation reaction but also the addition of the PKS ausV diketide product to 1,2-dihydro-7-hydroxydehydroaustin, forming precalidodehydroaustin. Finally, the iron/alpha-ketoglutarate-dependent dioxygenase converts precalidodehydroaustin into calidodehydroaustin. AusS is necessary for austinoids production and may play a possible function as a regulator. Its function is as follows. May play a possible function as a regulator. The polypeptide is Austinoid biosynthesis cluster protein S (Aspergillus calidoustus).